A 478-amino-acid chain; its full sequence is 3-isopropylmalate dehydratase large subunit (478 aa).

The [4Fe-4S] cluster site is built by cysteine 347, cysteine 407, and cysteine 410.

The protein belongs to the aconitase/IPM isomerase family. LeuC type 1 subfamily. In terms of assembly, heterodimer of LeuC and LeuD. [4Fe-4S] cluster is required as a cofactor.

It carries out the reaction (2R,3S)-3-isopropylmalate = (2S)-2-isopropylmalate. It functions in the pathway amino-acid biosynthesis; L-leucine biosynthesis; L-leucine from 3-methyl-2-oxobutanoate: step 2/4. Its function is as follows. Catalyzes the isomerization between 2-isopropylmalate and 3-isopropylmalate, via the formation of 2-isopropylmaleate. This Prochlorococcus marinus (strain MIT 9313) protein is 3-isopropylmalate dehydratase large subunit.